The primary structure comprises 833 residues: Serine-rich coiled-coil domain-containing protein 2 (833 aa).

The disordered stretch occupies residues 178–208; that stretch reads NRSSGNVQKPRVNSCASRSSSGESLAQSPDN. A compositionally biased stretch (polar residues) spans 191–208; it reads SCASRSSSGESLAQSPDN. Ser-222 carries the phosphoserine modification. Disordered regions lie at residues 321 to 345, 424 to 452, 478 to 508, and 602 to 631; these read LLKS…PADM, NRTR…FDSP, KHTS…SSDG, and DHYH…ESPL. Ser-451 is subject to Phosphoserine. Residues 496–506 are compositionally biased toward low complexity; it reads SSFELSPSDSS. The span at 606 to 615 shows a compositional bias: basic residues; sequence LSHPGHYHHH. Residues 711–747 adopt a coiled-coil conformation; it reads DQIYKNEDLLNEITQLKEEIKKKDEKIQLLEQQLATR. The tract at residues 789–833 is disordered; sequence FQGMPRTVPPHRRQTSSTTAFQQPSQIYRPRPGKTNKATTYRGPQ. Residues 803–814 are compositionally biased toward polar residues; that stretch reads TSSTTAFQQPSQ.

This sequence belongs to the CCSER family. As to expression, expressed in brain (at protein level).

Its subcellular location is the cytoplasm. The protein localises to the cytoskeleton. Microtubule-binding protein which might play a role in microtubule bundling. The sequence is that of Serine-rich coiled-coil domain-containing protein 2 (Ccser2) from Mus musculus (Mouse).